We begin with the raw amino-acid sequence, 534 residues long: CTP synthase (534 aa).

The interval 1–266 (MKTKFLFITG…DERIIDYLNI (266 aa)) is amidoligase domain. S14 is a binding site for CTP. UTP is bound at residue S14. ATP is bound by residues 15–20 (SLGKGL) and D72. Residues D72 and E140 each contribute to the Mg(2+) site. CTP-binding positions include 147–149 (DIE), 187–192 (KTKPTQ), and K223. Residues 187-192 (KTKPTQ) and K223 each bind UTP. An ATP-binding site is contributed by 239 to 241 (RDV). Positions 291–533 (TIAIVGKYVE…VGASLKHHGE (243 aa)) constitute a Glutamine amidotransferase type-1 domain. G353 serves as a coordination point for L-glutamine. C380 acts as the Nucleophile; for glutamine hydrolysis in catalysis. L-glutamine-binding positions include 381–384 (LGMQ), E404, and R461. Residues H506 and E508 contribute to the active site.

Belongs to the CTP synthase family. Homotetramer.

The enzyme catalyses UTP + L-glutamine + ATP + H2O = CTP + L-glutamate + ADP + phosphate + 2 H(+). It catalyses the reaction L-glutamine + H2O = L-glutamate + NH4(+). The catalysed reaction is UTP + NH4(+) + ATP = CTP + ADP + phosphate + 2 H(+). Its pathway is pyrimidine metabolism; CTP biosynthesis via de novo pathway; CTP from UDP: step 2/2. Its activity is regulated as follows. Allosterically activated by GTP, when glutamine is the substrate; GTP has no effect on the reaction when ammonia is the substrate. The allosteric effector GTP functions by stabilizing the protein conformation that binds the tetrahedral intermediate(s) formed during glutamine hydrolysis. Inhibited by the product CTP, via allosteric rather than competitive inhibition. Its function is as follows. Catalyzes the ATP-dependent amination of UTP to CTP with either L-glutamine or ammonia as the source of nitrogen. Regulates intracellular CTP levels through interactions with the four ribonucleotide triphosphates. This Syntrophotalea carbinolica (strain DSM 2380 / NBRC 103641 / GraBd1) (Pelobacter carbinolicus) protein is CTP synthase.